The following is a 144-amino-acid chain: Maximins 3/H14 (144 aa).

The N-terminal stretch at 1–18 (MNFKYIVAVSFLIASAYA) is a signal peptide. Propeptides lie at residues 19-43 (RSVQNDEQSLSQRDVLEEESLREIR) and 73-122 (RTAE…KKEK). I143 bears the Isoleucine amide mark.

Belongs to the bombinin family. As to expression, expressed by the skin glands.

Its subcellular location is the secreted. Maximin-3 shows antibacterial activity against both Gram-positive and Gram-negative bacteria. It also shows antimicrobial activity against the fungus C.albicans, but not against A.flavus nor P.uticale. It has little hemolytic activity. It possess a significant cytotoxicity against tumor cell lines. It possess a significant anti-HIV activity. It shows high spermicidal activity. In terms of biological role, maximin-H14 shows antimicrobial activity against bacteria and against the fungus C.albicans. Shows strong hemolytic activity. This chain is Maximins 3/H14, found in Bombina maxima (Giant fire-bellied toad).